A 354-amino-acid polypeptide reads, in one-letter code: Carbamoyl phosphate synthase arginine-specific small chain (354 aa).

Positions 1–163 (MKAYLHVASG…RTIETYGEGG (163 aa)) are CPSase. L-glutamine-binding residues include S46, G213, and G215. One can recognise a Glutamine amidotransferase type-1 domain in the interval 165 to 352 (HLVLVDFGYK…LQTVFKGENV (188 aa)). The active-site Nucleophile is C240. L-glutamine-binding residues include L241, Q244, N282, and Y285. Residues H325 and E327 contribute to the active site.

It belongs to the CarA family. As to quaternary structure, composed of two chains; the small (or glutamine) chain promotes the hydrolysis of glutamine to ammonia, which is used by the large (or ammonia) chain to synthesize carbamoyl phosphate. Tetramer of heterodimers (alpha,beta)4.

The catalysed reaction is hydrogencarbonate + L-glutamine + 2 ATP + H2O = carbamoyl phosphate + L-glutamate + 2 ADP + phosphate + 2 H(+). It catalyses the reaction L-glutamine + H2O = L-glutamate + NH4(+). It functions in the pathway amino-acid biosynthesis; L-arginine biosynthesis; carbamoyl phosphate from bicarbonate: step 1/1. Its function is as follows. Small subunit of the glutamine-dependent carbamoyl phosphate synthetase (CPSase). CPSase catalyzes the formation of carbamoyl phosphate from the ammonia moiety of glutamine, carbonate, and phosphate donated by ATP, constituting the first step of the biosynthetic pathway leading to arginine and/or urea. The small subunit (glutamine amidotransferase) binds and cleaves glutamine to supply the large subunit with the substrate ammonia. This is Carbamoyl phosphate synthase arginine-specific small chain from Geobacillus stearothermophilus (Bacillus stearothermophilus).